The primary structure comprises 303 residues: 5'-3' exonuclease (303 aa).

Residues Ile179 to Ala262 form the 5'-3' exonuclease domain.

5'-3' exonuclease acting preferentially on double-stranded DNA. The polypeptide is 5'-3' exonuclease (Halalkalibacterium halodurans (strain ATCC BAA-125 / DSM 18197 / FERM 7344 / JCM 9153 / C-125) (Bacillus halodurans)).